A 436-amino-acid chain; its full sequence is Hydrolyase ccsE (436 aa).

The Nucleophile role is filled by S249.

It belongs to the AB hydrolase superfamily. FUS2 hydrolase family. As to quaternary structure, homodimer.

It participates in mycotoxin biosynthesis. Functionally, hydrolyase; part of the gene cluster that mediates the biosynthesis of a family of the mycotoxins cytochalasins E and K. The hybrid PKS-NRPS synthetase ccsA and the enoyl reductase ccsC are responsible for fusion of phenylalanine with an octaketide backbone and subsequent release of the stable tetramic acid precursor. The polyketide synthase module (PKS) of the PKS-NRPS ccsA is responsible for the synthesis of the octaketide backbone. The downstream nonribosomal peptide synthetase (NRPS) amidates the carboxyl end of the octaketide with a phenylalanine. A reductase-like domain (R) at the C-terminus catalyzes the reductive release of the polyketide-amino acid intermediate. Because ccsA lacks a designated enoylreductase (ER) domain, the required activity is provided the enoyl reductase ccsC. Upon formation of the 11-membered carbocycle-fused perhydroisoindolone intermediate, a number of oxidative steps are required to afford the final cytochalasin E and K, including two hydroxylations at C17 and C18, one alcohol oxidation at C17, one epoxidation at C6 and C7 and two Baeyer-Villiger oxidations. The oxidative modification at C17, C18 and the C6-C7 epoxidation are likely to be catalyzed by the two cytochrome P450 oxygenases ccsD and ccsG. CcsD may be responsible for the epoxidation of the C6-C7 double bond. CcsG may be responsible for the successive oxidative modifications at C17 and C18. The double Baeyer-Villiger oxidations of ketocytochalasin to precytochalasin and cytochalasin Z(16) are among the final steps leading to cytochalasin E and K and are catalyzed by ccsB. The first oxygen insertion step follows that of the classic BVMO mechanism, generating the ester precytochalasin. Release of precytochalasin into an aqueous environment can generate the shunt product iso-precytochalasin through spontaneous isomerization. Alternatively, precytochalasin can undergo further oxidation by ccsB to yield the in-line carbonate-containing cytochalasin Z(16). Cytochalasin Z(16) is a precursor to cytochalasin E and cytochalasin K, whereas iso-precytochalasin is a precursor to cytochalasin Z(17) and rosellichalasin. The hydrolyase ccsE may catalyze hydrolysis of epoxide bond in cytochalasin E to afford cytochalasin K. The function of ccsF has not been assigned but it may play a role in post-PKS-NRPS biosynthetic step, resistance or transport of cytochalasins and related PKS-NRPS products. This Aspergillus clavatus (strain ATCC 1007 / CBS 513.65 / DSM 816 / NCTC 3887 / NRRL 1 / QM 1276 / 107) protein is Hydrolyase ccsE.